Consider the following 341-residue polypeptide: Elongation factor Ts (341 aa).

An involved in Mg(2+) ion dislocation from EF-Tu region spans residues 80–83 (TDFV).

It belongs to the EF-Ts family.

The protein resides in the cytoplasm. In terms of biological role, associates with the EF-Tu.GDP complex and induces the exchange of GDP to GTP. It remains bound to the aminoacyl-tRNA.EF-Tu.GTP complex up to the GTP hydrolysis stage on the ribosome. This chain is Elongation factor Ts, found in Lactobacillus helveticus (strain DPC 4571).